A 1149-amino-acid polypeptide reads, in one-letter code: Transforming acidic coiled-coil-containing protein 2 (1149 aa).

Disordered stretches follow at residues 1–73 (MGNE…GSNQ), 91–227 (SASP…ASSG), and 247–430 (PCSA…VPLT). Polar residues predominate over residues 13 to 35 (TSSVQSPRSLQPPGKSQSLQKQQ). A compositionally biased stretch (low complexity) spans 91-106 (SASPSAARASPAPLAP). Position 100 is a phosphoserine (Ser-100). Positions 155-180 (KAPPAPPPPPPEVTPEPEVIDPPAPE) are enriched in pro residues. At Ser-265 the chain carries Phosphoserine. 2 stretches are compositionally biased toward polar residues: residues 267 to 284 (ESVPPSKSTLSRSLSLQA) and 300 to 317 (TLTTDACGTGSNSASSTL). The span at 318–334 (KRTKKTRPPSLKKKQAT) shows a compositional bias: basic residues. Ser-354 bears the Phosphoserine mark. Residues 358–368 (SEEHLAPETKT) are compositionally biased toward basic and acidic residues. Ser-419 is modified (phosphoserine). Thr-439 bears the Phosphothreonine mark. Residues 463–617 (SEDKGSWESQ…PAKKKKTPLK (155 aa)) form a disordered region. Residues 481–498 (KIGKKPVAKMPLRRPKMK) are compositionally biased toward basic residues. In terms of domain architecture, SPAZ spans 508-596 (PASPPRSPTE…SPASFEIPAS (89 aa)). Residues Ser-510 and Ser-514 each carry the phosphoserine modification. Thr-516 carries the phosphothreonine modification. Positions 541–561 (NPFSSTSKMQESPKLSQQSYN) are enriched in polar residues. Phosphoserine occurs at positions 552, 582, 585, 587, and 596. Residues 575-590 (KASSKTPSSPSKSPAS) are compositionally biased toward low complexity. 3 positions are modified to phosphothreonine: Thr-632, Thr-653, and Thr-657. 2 disordered regions span residues 636-665 (KKSPKRSPLSDPPSQDPTPAATPEAPSAIS) and 696-719 (DFPQPSDLSNFVNETKFNSPSEEL). Residues 652–665 (PTPAATPEAPSAIS) are compositionally biased toward low complexity. The span at 701-716 (SDLSNFVNETKFNSPS) shows a compositional bias: polar residues. Phosphoserine occurs at positions 714 and 736. At Thr-755 the chain carries Phosphothreonine. Residues 756–780 (PQESPVKSPPVRMSDSPTPCSGSSF) are disordered. Residues Ser-759 and Ser-771 each carry the phosphoserine modification. Residues 770–780 (DSPTPCSGSSF) are compositionally biased toward polar residues. Coiled-coil stretches lie at residues 877-905 (AQKLQEELEFAVMRIEALKLARQIALASR) and 948-1148 (DLDS…KMGK).

Belongs to the TACC family. Interacts with microtubules. Interacts with YEATS4, GCN5L2 and PCAF. Interacts with CCDC100/CEP120. Phosphorylated; which is required for localization in centrosome. Expressed in brain, kidney, lung, thymus and ovary. Not detectable in normal tissues at protein level.

The protein resides in the cytoplasm. It localises to the nucleus. It is found in the cytoskeleton. The protein localises to the microtubule organizing center. Its subcellular location is the centrosome. Functionally, plays a role in the microtubule-dependent coupling of the nucleus and the centrosome. Involved in the processes that regulate centrosome-mediated interkinetic nuclear migration (INM) of neural progenitors. May play a role in organizing centrosomal microtubules. This Mus musculus (Mouse) protein is Transforming acidic coiled-coil-containing protein 2 (Tacc2).